Here is a 204-residue protein sequence, read N- to C-terminus: Large ribosomal subunit protein bL25 (204 aa).

This sequence belongs to the bacterial ribosomal protein bL25 family. CTC subfamily. Part of the 50S ribosomal subunit; part of the 5S rRNA/L5/L18/L25 subcomplex. Contacts the 5S rRNA. Binds to the 5S rRNA independently of L5 and L18.

This is one of the proteins that binds to the 5S RNA in the ribosome where it forms part of the central protuberance. In Burkholderia pseudomallei (strain 668), this protein is Large ribosomal subunit protein bL25.